We begin with the raw amino-acid sequence, 37 residues long: Large ribosomal subunit protein bL36 (37 aa).

It belongs to the bacterial ribosomal protein bL36 family.

This is Large ribosomal subunit protein bL36 from Staphylococcus carnosus (strain TM300).